The sequence spans 549 residues: CTP synthase (549 aa).

Positions 1–267 (MTKFVFVTGG…AAQVLSLLNL (267 aa)) are amidoligase domain. Residue serine 13 coordinates CTP. UTP is bound at residue serine 13. ATP-binding positions include 14–19 (SIGKGI) and aspartate 71. Mg(2+) is bound by residues aspartate 71 and glutamate 141. CTP contacts are provided by residues 148–150 (DIE), 188–193 (KTKPTQ), and lysine 224. Residues 188–193 (KTKPTQ) and lysine 224 contribute to the UTP site. Positions 292 to 534 (EIAIVGKYVR…VQAARTHSSD (243 aa)) constitute a Glutamine amidotransferase type-1 domain. Glycine 354 provides a ligand contact to L-glutamine. Residue cysteine 381 is the Nucleophile; for glutamine hydrolysis of the active site. Residues 382-385 (LGMQ), glutamate 405, and arginine 462 each bind L-glutamine. Residues histidine 507 and glutamate 509 contribute to the active site.

This sequence belongs to the CTP synthase family. As to quaternary structure, homotetramer.

The catalysed reaction is UTP + L-glutamine + ATP + H2O = CTP + L-glutamate + ADP + phosphate + 2 H(+). It catalyses the reaction L-glutamine + H2O = L-glutamate + NH4(+). It carries out the reaction UTP + NH4(+) + ATP = CTP + ADP + phosphate + 2 H(+). The protein operates within pyrimidine metabolism; CTP biosynthesis via de novo pathway; CTP from UDP: step 2/2. With respect to regulation, allosterically activated by GTP, when glutamine is the substrate; GTP has no effect on the reaction when ammonia is the substrate. The allosteric effector GTP functions by stabilizing the protein conformation that binds the tetrahedral intermediate(s) formed during glutamine hydrolysis. Inhibited by the product CTP, via allosteric rather than competitive inhibition. Catalyzes the ATP-dependent amination of UTP to CTP with either L-glutamine or ammonia as the source of nitrogen. Regulates intracellular CTP levels through interactions with the four ribonucleotide triphosphates. This chain is CTP synthase, found in Cyanothece sp. (strain PCC 7425 / ATCC 29141).